Consider the following 276-residue polypeptide: NAD kinase (276 aa).

Aspartate 61 serves as the catalytic Proton acceptor. NAD(+)-binding positions include 61–62 (DG), 134–135 (ND), arginine 145, lysine 162, aspartate 164, valine 172, 175–180 (TAYSFS), and glutamine 234.

It belongs to the NAD kinase family. Requires a divalent metal cation as cofactor.

The protein resides in the cytoplasm. The enzyme catalyses NAD(+) + ATP = ADP + NADP(+) + H(+). Its function is as follows. Involved in the regulation of the intracellular balance of NAD and NADP, and is a key enzyme in the biosynthesis of NADP. Catalyzes specifically the phosphorylation on 2'-hydroxyl of the adenosine moiety of NAD to yield NADP. The chain is NAD kinase from Clostridium perfringens (strain ATCC 13124 / DSM 756 / JCM 1290 / NCIMB 6125 / NCTC 8237 / Type A).